Here is a 716-residue protein sequence, read N- to C-terminus: Protein C-mannosyl-transferase DPY19L3 (716 aa).

Topologically, residues 1–43 (MMSIRQRREIRATEVSEDFPAQEENVKLENKLPSGCTSRRLWK) are cytoplasmic. A helical membrane pass occupies residues 44-64 (ILSLTIGGTIALCIGLLTSVY). At 65–154 (LATLHENDLW…RVLPIQKYLE (90 aa)) the chain is on the lumenal side. The N-linked (GlcNAc...) asparagine glycan is linked to N118. The helical transmembrane segment at 155 to 182 (PVYFYIYTLFGLQAIYVTALYITSWLLS) threads the bilayer. Residues 183–184 (GT) are Cytoplasmic-facing. Positions 185-197 (WLSGLLAAFWYVT) form an intramembrane region, name=3. Residues 198–215 (NRIDTTRVEFTIPLRENW) lie on the Cytoplasmic side of the membrane. Residues 216–230 (ALPFFAIQIAAITYF) constitute an intramembrane region (name=4). At 231 to 239 (LRPNLQPLS) the chain is on the cytoplasmic side. The helical transmembrane segment at 240 to 256 (ERLTLLAIFISTFLFSL) threads the bilayer. The Lumenal segment spans residues 257-262 (TWQFNQ). A helical transmembrane segment spans residues 263–279 (FMMLMQALVLFTLDSLD). Over 280–289 (MLPAVKATWL) the chain is Cytoplasmic. Residues 290 to 306 (YGIQITSLLLVCILQFF) traverse the membrane as a helical segment. Residues 307–308 (NS) lie on the Lumenal side of the membrane. Residues 309–323 (MILGSLLISFNLSVF) form a helical membrane-spanning segment. The Cytoplasmic segment spans residues 324-338 (IARKLQKNLKTGSFL). A helical transmembrane segment spans residues 339-359 (NRLGKLLLHLFMVLCLTLFLN). At 360 to 414 (NIIKKILNLKSDEHIFKFLKAKFGLGATRDFDANLYLCEEAFGLLPFNTFGRLSD) the chain is on the lumenal side. Residues 415 to 437 (TLLFYAYIFVLSITVIVAFVVAF) form a helical membrane-spanning segment. At 438–465 (HNLSDSTNQQSVGKMEKGTVDLKPETAY) the chain is on the cytoplasmic side. A helical transmembrane segment spans residues 466-485 (NLIHTILFGFLALSTMRMKY). At 486–487 (LW) the chain is on the lumenal side. The helical transmembrane segment at 488–499 (TSHMCVFASFGL) threads the bilayer. Topologically, residues 500–522 (CSPEIWELLLKSVHLYNPKRICI) are cytoplasmic. Residues 523-539 (MRYSVPILILLYLCYKF) form a helical membrane-spanning segment. Over 540–716 (WPGMMDELSE…FHVYKLSRNK (177 aa)) the chain is Lumenal. N-linked (GlcNAc...) asparagine glycosylation is present at N704.

This sequence belongs to the dpy-19 family. In terms of tissue distribution, widely expressed.

The protein resides in the endoplasmic reticulum membrane. It carries out the reaction L-tryptophyl-[protein] + a di-trans,poly-cis-dolichyl beta-D-mannosyl phosphate = C-alpha-D-mannosyl-L-tryptophyl-[protein] + a di-trans,poly-cis-dolichyl phosphate + H(+). It functions in the pathway protein modification; protein glycosylation. Its function is as follows. C-mannosyltransferase that mediates C-mannosylation of tryptophan residues on target proteins. The reaction occurs on the luminal side of the endoplasmic reticulum and involves the transfer of a mannose unit from a dolichylphosphate mannose (Dol-P-Man) donor to an acceptor protein containing a WxxW or WxxC consensus sequence. C-mannosylates RSPO1, a Wnt signaling regulator, preferentially at the first Trp residue in the sequence WxxW. C-mannosylates the netrin receptor UNC5A, preferentially at the third tryptophan of WxxWxxWxxC sequence. Has no C-mannosyltransferase activity. This Homo sapiens (Human) protein is Protein C-mannosyl-transferase DPY19L3 (DPY19L3).